Here is a 204-residue protein sequence, read N- to C-terminus: Cytochrome c biogenesis ATP-binding export protein CcmA (204 aa).

The ABC transporter domain maps to leucine 3–threonine 204. Glycine 35–threonine 42 contributes to the ATP binding site.

It belongs to the ABC transporter superfamily. CcmA exporter (TC 3.A.1.107) family. The complex is composed of two ATP-binding proteins (CcmA) and two transmembrane proteins (CcmB).

The protein localises to the cell inner membrane. It catalyses the reaction heme b(in) + ATP + H2O = heme b(out) + ADP + phosphate + H(+). In terms of biological role, part of the ABC transporter complex CcmAB involved in the biogenesis of c-type cytochromes; once thought to export heme, this seems not to be the case, but its exact role is uncertain. Responsible for energy coupling to the transport system. The protein is Cytochrome c biogenesis ATP-binding export protein CcmA of Nitrobacter hamburgensis (strain DSM 10229 / NCIMB 13809 / X14).